Consider the following 292-residue polypeptide: Probable endonuclease 4 (292 aa).

Zn(2+) contacts are provided by histidine 71, histidine 111, glutamate 148, aspartate 182, histidine 185, histidine 217, aspartate 230, histidine 232, and glutamate 262.

It belongs to the AP endonuclease 2 family. It depends on Zn(2+) as a cofactor.

The enzyme catalyses Endonucleolytic cleavage to 5'-phosphooligonucleotide end-products.. Endonuclease IV plays a role in DNA repair. It cleaves phosphodiester bonds at apurinic or apyrimidinic (AP) sites, generating a 3'-hydroxyl group and a 5'-terminal sugar phosphate. This Aster yellows witches'-broom phytoplasma (strain AYWB) protein is Probable endonuclease 4.